The sequence spans 552 residues: Outer dynein arm protein 1 (552 aa).

Positions 1 to 27 (MPSADATRGGGSAGSMGKGTLGAGDTL) are disordered. Gly residues predominate over residues 8–22 (RGGGSAGSMGKGTLG). Coiled-coil stretches lie at residues 28–59 (GHKS…LENK), 120–260 (SAKE…QELL), and 331–395 (TLFN…YEKR). Disordered regions lie at residues 482 to 515 (NRII…TREH) and 528 to 552 (LETA…PTRR). Residues 493–506 (QEEEVEGLEPEPVE) are compositionally biased toward acidic residues.

This sequence belongs to the ODA1/DCC2 family. Component of the outer dynein arm complex.

It localises to the cytoplasm. It is found in the cytoskeleton. The protein localises to the cilium axoneme. Component of the outer dynein arm complex required for assembly of the outer dynein arm-docking complex (ODA-DC) and the outer dynein arm onto the doublet microtubule. In Chlamydomonas reinhardtii (Chlamydomonas smithii), this protein is Outer dynein arm protein 1 (ODA1).